The sequence spans 429 residues: Enolase (429 aa).

A (2R)-2-phosphoglycerate-binding site is contributed by Gln163. Residue Glu205 is the Proton donor of the active site. 3 residues coordinate Mg(2+): Asp242, Glu286, and Asp313. (2R)-2-phosphoglycerate-binding residues include Lys338, Arg367, Ser368, and Lys389. The active-site Proton acceptor is the Lys338.

This sequence belongs to the enolase family. Requires Mg(2+) as cofactor.

The protein localises to the cytoplasm. It is found in the secreted. Its subcellular location is the cell surface. It carries out the reaction (2R)-2-phosphoglycerate = phosphoenolpyruvate + H2O. Its pathway is carbohydrate degradation; glycolysis; pyruvate from D-glyceraldehyde 3-phosphate: step 4/5. Catalyzes the reversible conversion of 2-phosphoglycerate (2-PG) into phosphoenolpyruvate (PEP). It is essential for the degradation of carbohydrates via glycolysis. The protein is Enolase of Thermoanaerobacter pseudethanolicus (strain ATCC 33223 / 39E) (Clostridium thermohydrosulfuricum).